The sequence spans 140 residues: Large ribosomal subunit protein uL14 (140 aa).

This sequence belongs to the universal ribosomal protein uL14 family.

In Aedes aegypti (Yellowfever mosquito), this protein is Large ribosomal subunit protein uL14 (RpL23-A).